A 393-amino-acid polypeptide reads, in one-letter code: S-adenosylmethionine synthase (393 aa).

His-16 is a binding site for ATP. A Mg(2+)-binding site is contributed by Asp-18. K(+) is bound at residue Glu-44. L-methionine-binding residues include Glu-57 and Gln-100. The interval 100-110 (QSNDIAQGVDH) is flexible loop. Residues 167 to 169 (DAK), 238 to 239 (RF), Asp-247, 253 to 254 (RK), Ala-270, and Lys-274 each bind ATP. Asp-247 is a binding site for L-methionine. Residue Lys-278 participates in L-methionine binding.

The protein belongs to the AdoMet synthase family. As to quaternary structure, homotetramer; dimer of dimers. Mg(2+) serves as cofactor. It depends on K(+) as a cofactor.

It is found in the cytoplasm. The catalysed reaction is L-methionine + ATP + H2O = S-adenosyl-L-methionine + phosphate + diphosphate. Its pathway is amino-acid biosynthesis; S-adenosyl-L-methionine biosynthesis; S-adenosyl-L-methionine from L-methionine: step 1/1. Functionally, catalyzes the formation of S-adenosylmethionine (AdoMet) from methionine and ATP. The overall synthetic reaction is composed of two sequential steps, AdoMet formation and the subsequent tripolyphosphate hydrolysis which occurs prior to release of AdoMet from the enzyme. This is S-adenosylmethionine synthase from Paracidovorax citrulli (strain AAC00-1) (Acidovorax citrulli).